The primary structure comprises 404 residues: High affinity immunoglobulin gamma Fc receptor I (404 aa).

Positions 1 to 24 (MILTSFGDDMWLLTTLLLWVPVGG) are cleaved as a signal peptide. Over 25-297 (EVVNATKAVI…QVLGPQSSAP (273 aa)) the chain is Extracellular. N-linked (GlcNAc...) asparagine glycosylation is found at Asn-28, Asn-48, Asn-69, Asn-168, and Asn-249. Ig-like C2-type domains lie at 32 to 111 (AVIT…LQIH), 117 to 194 (LQAS…SITV), and 201 to 286 (PVLR…PELE). 3 disulfide bridges follow: Cys-53-Cys-95, Cys-134-Cys-177, and Cys-221-Cys-269. The helical transmembrane segment at 298–320 (VWFHILFYLSVGIMFSLNTVLYV) threads the bilayer. The interval 321 to 342 (KIHRLQREKKYNLEVPLVSEQG) is interaction with EPB41L2. The Cytoplasmic segment spans residues 321-404 (KIHRLQREKK…DSTGAQTSQS (84 aa)). The segment at 346–404 (NSFQQVRSDGVYEEVTATASQTTPKEAPDGPRSSVGDCGPEQPEPLPPSDSTGAQTSQS) is disordered. At Ser-347 the chain carries Phosphoserine. Residue Thr-368 is modified to Phosphothreonine. Positions 394–404 (SDSTGAQTSQS) are enriched in polar residues.

The protein belongs to the immunoglobulin superfamily. FCGR1 family. In terms of assembly, interacts with FCERG1; forms a functional signaling complex. Interacts with FLNA; prevents FCGR1A degradation. Interacts with EPB41L2, LAT and PPL. Interacts with HCK and LYN. N-glycosylated. Post-translationally, phosphorylated on serine residues. In terms of tissue distribution, macrophage-specific.

Its subcellular location is the cell membrane. In terms of biological role, high affinity receptor for the Fc region of immunoglobulins gamma. Functions in both innate and adaptive immune responses. The chain is High affinity immunoglobulin gamma Fc receptor I (Fcgr1) from Mus musculus (Mouse).